We begin with the raw amino-acid sequence, 465 residues long: Methionine aminopeptidase 2-2 (465 aa).

A compositionally biased stretch (basic and acidic residues) spans 1–13 (MGSKTPNDHRRGP). Positions 1-92 (MGSKTPNDHR…KKKTLLGGLQ (92 aa)) are disordered. Positions 44 to 55 (GETEDGEDEDDD) are enriched in acidic residues. Positions 71-86 (TKKKNKRKKNKKKKKT) are enriched in basic residues. Histidine 217 is a binding site for substrate. A divalent metal cation-binding residues include aspartate 238, aspartate 249, and histidine 318. Residue histidine 326 participates in substrate binding. Residues glutamate 351 and glutamate 446 each coordinate a divalent metal cation.

The protein belongs to the peptidase M24A family. Methionine aminopeptidase eukaryotic type 2 subfamily. It depends on Co(2+) as a cofactor. Requires Zn(2+) as cofactor. The cofactor is Mn(2+). Fe(2+) serves as cofactor.

The protein localises to the cytoplasm. It catalyses the reaction Release of N-terminal amino acids, preferentially methionine, from peptides and arylamides.. Cotranslationally removes the N-terminal methionine from nascent proteins. The N-terminal methionine is often cleaved when the second residue in the primary sequence is small and uncharged (Met-Ala-, Cys, Gly, Pro, Ser, Thr, or Val). The sequence is that of Methionine aminopeptidase 2-2 from Ajellomyces dermatitidis (strain ER-3 / ATCC MYA-2586) (Blastomyces dermatitidis).